The chain runs to 220 residues: Protein-L-isoaspartate O-methyltransferase (220 aa).

Ser-68 is a catalytic residue.

Belongs to the methyltransferase superfamily. L-isoaspartyl/D-aspartyl protein methyltransferase family.

The protein localises to the cytoplasm. The catalysed reaction is [protein]-L-isoaspartate + S-adenosyl-L-methionine = [protein]-L-isoaspartate alpha-methyl ester + S-adenosyl-L-homocysteine. Catalyzes the methyl esterification of L-isoaspartyl residues in peptides and proteins that result from spontaneous decomposition of normal L-aspartyl and L-asparaginyl residues. It plays a role in the repair and/or degradation of damaged proteins. The chain is Protein-L-isoaspartate O-methyltransferase from Dictyoglomus turgidum (strain DSM 6724 / Z-1310).